Consider the following 507-residue polypeptide: ATP synthase subunit alpha, chloroplastic (507 aa).

An ATP-binding site is contributed by 170 to 177; it reads GDRQTGKT.

The protein belongs to the ATPase alpha/beta chains family. In terms of assembly, F-type ATPases have 2 components, CF(1) - the catalytic core - and CF(0) - the membrane proton channel. CF(1) has five subunits: alpha(3), beta(3), gamma(1), delta(1), epsilon(1). CF(0) has four main subunits: a, b, b' and c.

It localises to the plastid. It is found in the chloroplast thylakoid membrane. The enzyme catalyses ATP + H2O + 4 H(+)(in) = ADP + phosphate + 5 H(+)(out). Produces ATP from ADP in the presence of a proton gradient across the membrane. The alpha chain is a regulatory subunit. The protein is ATP synthase subunit alpha, chloroplastic of Manihot esculenta (Cassava).